The primary structure comprises 369 residues: Phospho-N-acetylmuramoyl-pentapeptide-transferase (369 aa).

A run of 10 helical transmembrane segments spans residues 2-22, 55-75, 82-102, 120-140, 163-183, 196-216, 240-260, 267-287, 292-312, and 349-369; these read IPLLMGAGISLALVMIGTQLF, AVVIGTVILAYLLTHLISWWI, PSVSGWLLLLLMAGMGLVGFL, AKLILQAAIGILFAVLAINFA, LAFAGAGLGVLLFVIWANLII, LDGLAAGASVMVFGAYTLIGI, PLDLALLAAIIFGALIGFLWW, IFMGDTGSLAIGGAIAGFAIL, ILLAIIGGLFVLITLSVILQV, and ILGGLLVAIGLGAFYAEWVVF.

This sequence belongs to the glycosyltransferase 4 family. MraY subfamily. Requires Mg(2+) as cofactor.

It localises to the cell membrane. It catalyses the reaction UDP-N-acetyl-alpha-D-muramoyl-L-alanyl-gamma-D-glutamyl-meso-2,6-diaminopimeloyl-D-alanyl-D-alanine + di-trans,octa-cis-undecaprenyl phosphate = di-trans,octa-cis-undecaprenyl diphospho-N-acetyl-alpha-D-muramoyl-L-alanyl-D-glutamyl-meso-2,6-diaminopimeloyl-D-alanyl-D-alanine + UMP. The protein operates within cell wall biogenesis; peptidoglycan biosynthesis. Catalyzes the initial step of the lipid cycle reactions in the biosynthesis of the cell wall peptidoglycan: transfers peptidoglycan precursor phospho-MurNAc-pentapeptide from UDP-MurNAc-pentapeptide onto the lipid carrier undecaprenyl phosphate, yielding undecaprenyl-pyrophosphoryl-MurNAc-pentapeptide, known as lipid I. The chain is Phospho-N-acetylmuramoyl-pentapeptide-transferase from Renibacterium salmoninarum (strain ATCC 33209 / DSM 20767 / JCM 11484 / NBRC 15589 / NCIMB 2235).